A 1326-amino-acid chain; its full sequence is Probable serine/threonine-protein kinase gdt8 (1326 aa).

The signal sequence occupies residues 1-22; it reads MINKILIKLITIIIFCFSFLFA. The Extracellular segment spans residues 23-782; it reads EEDLIRTPPG…VDRNENLELK (760 aa). 2 disordered regions span residues 419–467 and 731–762; these read VDQN…GNQG and EPPT…QTPI. Composition is skewed to low complexity over residues 422–460 and 731–761; these read NNNN…NNNN and EPPT…TQTP. A helical membrane pass occupies residues 783–803; the sequence is IALPICLSLALLIGIIIMICI. Over 804–1326 the chain is Cytoplasmic; sequence FKKVQSNSKL…TKEDKDLDEN (523 aa). The interval 833–858 is disordered; that stretch reads IVSQPPTVIEEKPQDNSKPDDQKLIE. The segment covering 841–858 has biased composition (basic and acidic residues); it reads IEEKPQDNSKPDDQKLIE. A Protein kinase domain is found at 1036-1292; it reads IKTEQLIASY…FSEISLHLEI (257 aa). ATP is bound by residues 1042–1050 and lysine 1065; that span reads IASYLPSKV. Aspartate 1158 serves as the catalytic Proton acceptor. Residues 1301 to 1326 form a disordered region; sequence MNESEESTSNHNTNSKTKEDKDLDEN. Basic and acidic residues predominate over residues 1316-1326; that stretch reads KTKEDKDLDEN.

This sequence in the N-terminal section; belongs to the GDT family. It in the C-terminal section; belongs to the protein kinase superfamily. TKL Ser/Thr protein kinase family.

It localises to the membrane. The catalysed reaction is L-seryl-[protein] + ATP = O-phospho-L-seryl-[protein] + ADP + H(+). It catalyses the reaction L-threonyl-[protein] + ATP = O-phospho-L-threonyl-[protein] + ADP + H(+). This chain is Probable serine/threonine-protein kinase gdt8 (gdt8), found in Dictyostelium discoideum (Social amoeba).